Consider the following 255-residue polypeptide: MAFSLCWKAPRSPWSFLQAVNNGSPLFLWRTVGSCLDPKMKAYLEENTEVTSSGSLTPEIQLRLLTPRCKFWWERADLWPYSDPYWAIYWPGGQALSRYLLDNPAVVRGKSVLDLGSGCGATAIAAKMSGASKILANDIDPIAGMAITLNCKLNGLNPFPVLTKNILNTQQGKFDLIVLGDMFYDEDLADSLHLWLQNYFWTHGTRVLIGDPGRPQFSGHSIRHQLYQLVEYTLPEPTQQENNGLTTSAVWDFHP.

Residues 1 to 32 (MAFSLCWKAPRSPWSFLQAVNNGSPLFLWRTV) constitute a mitochondrion transit peptide.

Belongs to the methyltransferase superfamily. ETFBKMT family. In terms of assembly, interacts with HSPD1; this protein may possibly be a methylation substrate.

The protein localises to the cytoplasm. It is found in the mitochondrion matrix. It catalyses the reaction L-lysyl-[protein] + 3 S-adenosyl-L-methionine = N(6),N(6),N(6)-trimethyl-L-lysyl-[protein] + 3 S-adenosyl-L-homocysteine + 3 H(+). Its function is as follows. Protein-lysine methyltransferase that selectively trimethylates the flavoprotein ETFB in mitochondria. Thereby, may negatively regulate the function of ETFB in electron transfer from Acyl-CoA dehydrogenases. This is Electron transfer flavoprotein beta subunit lysine methyltransferase from Mus musculus (Mouse).